The sequence spans 131 residues: Large ribosomal subunit protein bL17 (131 aa).

The protein belongs to the bacterial ribosomal protein bL17 family. In terms of assembly, part of the 50S ribosomal subunit. Contacts protein L32.

In Nitrosospira multiformis (strain ATCC 25196 / NCIMB 11849 / C 71), this protein is Large ribosomal subunit protein bL17.